A 200-amino-acid polypeptide reads, in one-letter code: uncharacterized protein (200 aa).

This is an uncharacterized protein from Bacillus subtilis (strain 168).